We begin with the raw amino-acid sequence, 280 residues long: 4-diphosphocytidyl-2-C-methyl-D-erythritol kinase (280 aa).

Residue lysine 8 is part of the active site. Position 91–101 (91–101 (PVAAGLAGGST)) interacts with ATP. Residue aspartate 133 is part of the active site.

The protein belongs to the GHMP kinase family. IspE subfamily.

The catalysed reaction is 4-CDP-2-C-methyl-D-erythritol + ATP = 4-CDP-2-C-methyl-D-erythritol 2-phosphate + ADP + H(+). It participates in isoprenoid biosynthesis; isopentenyl diphosphate biosynthesis via DXP pathway; isopentenyl diphosphate from 1-deoxy-D-xylulose 5-phosphate: step 3/6. In terms of biological role, catalyzes the phosphorylation of the position 2 hydroxy group of 4-diphosphocytidyl-2C-methyl-D-erythritol. This chain is 4-diphosphocytidyl-2-C-methyl-D-erythritol kinase, found in Clostridium botulinum (strain ATCC 19397 / Type A).